The sequence spans 166 residues: MAPSTVAVEMLSPKEKNRLRKPVVEKMRRDRINSSIEQLKLLLEQEFARHQPNSKLEKADILEMAVSYLKHSKAFAAAAGPKSLHQDYSEGYSWCLQEAVQFLTLHAASDTQMKLLYHFQRPPAPAAPVKETPTPGAAPQPARSSTKAAASVSTSRQSACGLWRPW.

A bHLH domain is found at lysine 16–serine 72. The 32-residue stretch at tyrosine 88 to phenylalanine 119 folds into the Orange domain. Residues proline 125–tryptophan 166 form a disordered region. Residues alanine 142–arginine 156 are compositionally biased toward low complexity. Positions tryptophan 163 to tryptophan 166 match the WRPW motif motif.

In terms of assembly, transcription repression requires formation of a complex with a corepressor protein of the Groucho/TLE family. In terms of tissue distribution, expressed predominantly in embryonic neural lineage cells.

The protein localises to the nucleus. Its function is as follows. Transcriptional repressor of genes that require a bHLH protein for their transcription. Plays an important role as neurogenesis negative regulator. This Rattus norvegicus (Rat) protein is Transcription factor HES-5 (Hes5).